Consider the following 676-residue polypeptide: MQGTVAFEDVAVNFSQEEWSLLSEVQRCLYHDVMLENWVLISSLGCWCGSEDEEAPSKKSISIQRVSQVSTPGAGVSPKKAHSCEMCGAILGDILHLADHQGTHHKQKLHRCEAWGNKLYDSSNRPHQNQYLGEKPYRSSVEEALFVKRCKFHVSEESSIFIQSGKDFLPSSGLLLQEATHTGEKSNSKPECESPFQWGDTHYSCGECMKHSSTKHVFVQQQRLPSREECYCWECGKSFSKYDSVSNHQRVHTGKRPYECGECGKSFSHKGSLVQHQRVHTGKRPYECGECGKSFSHKGSLVQHQRVHTGERPYECGECGKSFSQNGTLIKHQRVHTGERPYECEECGKCFTQKGNLIQHQRGHTSERPYECEECGKCFSQKGTLTEHHRVHTRERPYECGECGKSFSRKGHLRNHQRGHTGERPYECGECGKSFSRKGNLIQHQRSHTGERPYECRECRKLFRGKSHLIEHQRVHTGERPYECNECGKSFQDSSGFRVHQRVHTGEKPFECSECGKSFPQSCSLLRHRRVHTGERPYECGECGKSFHQSSSLLRHQKTHTAERPYECRECGKFFSSLLEHRRVHTGERPYECRECGKTFTRRSAHFKHQRLHTRGKPYECSECGKSFAETFSLTEHRRVHTGERPYECSECGKSFHRSSSLLRHQRVHTERSPYK.

The KRAB domain maps to 5-91 (VAFEDVAVNF…HSCEMCGAIL (87 aa)). 16 consecutive C2H2-type zinc fingers follow at residues 82-105 (HSCEMCGAILGDILHLADHQGTHH), 230-252 (CYCWECGKSFSKYDSVSNHQRVH), 258-280 (YECGECGKSFSHKGSLVQHQRVH), 286-308 (YECGECGKSFSHKGSLVQHQRVH), 314-336 (YECGECGKSFSQNGTLIKHQRVH), 342-364 (YECEECGKCFTQKGNLIQHQRGH), 370-392 (YECEECGKCFSQKGTLTEHHRVH), 398-420 (YECGECGKSFSRKGHLRNHQRGH), 426-448 (YECGECGKSFSRKGNLIQHQRSH), 454-476 (YECRECRKLFRGKSHLIEHQRVH), 482-504 (YECNECGKSFQDSSGFRVHQRVH), 510-532 (FECSECGKSFPQSCSLLRHRRVH), 538-560 (YECGECGKSFHQSSSLLRHQKTH), 591-613 (YECRECGKTFTRRSAHFKHQRLH), 619-641 (YECSECGKSFAETFSLTEHRRVH), and 647-669 (YECSECGKSFHRSSSLLRHQRVH).

The protein belongs to the krueppel C2H2-type zinc-finger protein family. Highly expressed in heart.

Its subcellular location is the nucleus. Transcriptional repressor. May play a role as regulator of the ubiquitin-proteasome system and autophagy-lysosomal pathway. The sequence is that of Zinc finger protein 418 (ZNF418) from Homo sapiens (Human).